A 155-amino-acid polypeptide reads, in one-letter code: RNA pyrophosphohydrolase (155 aa).

Residues 6 to 148 (GYRANVAIVL…KQEVYRKALT (143 aa)) form the Nudix hydrolase domain. Residues 38-59 (GGVATGETPLQAMYRELHEEIG) carry the Nudix box motif.

It belongs to the Nudix hydrolase family. RppH subfamily. A divalent metal cation serves as cofactor.

In terms of biological role, accelerates the degradation of transcripts by removing pyrophosphate from the 5'-end of triphosphorylated RNA, leading to a more labile monophosphorylated state that can stimulate subsequent ribonuclease cleavage. The polypeptide is RNA pyrophosphohydrolase (Francisella tularensis subsp. tularensis (strain FSC 198)).